The primary structure comprises 475 residues: Bifunctional protein HldE (475 aa).

Positions 1–318 are ribokinase; it reads MKITLPEFGK…ANALYTEQET (318 aa). 195-198 serves as a coordination point for ATP; sequence NMSE. The active site involves D264. Residues 344–475 are cytidylyltransferase; that stretch reads MTNGCFDILH…DIIKTIRERG (132 aa).

In the N-terminal section; belongs to the carbohydrate kinase PfkB family. This sequence in the C-terminal section; belongs to the cytidylyltransferase family. In terms of assembly, homodimer.

It catalyses the reaction D-glycero-beta-D-manno-heptose 7-phosphate + ATP = D-glycero-beta-D-manno-heptose 1,7-bisphosphate + ADP + H(+). The catalysed reaction is D-glycero-beta-D-manno-heptose 1-phosphate + ATP + H(+) = ADP-D-glycero-beta-D-manno-heptose + diphosphate. Its pathway is nucleotide-sugar biosynthesis; ADP-L-glycero-beta-D-manno-heptose biosynthesis; ADP-L-glycero-beta-D-manno-heptose from D-glycero-beta-D-manno-heptose 7-phosphate: step 1/4. The protein operates within nucleotide-sugar biosynthesis; ADP-L-glycero-beta-D-manno-heptose biosynthesis; ADP-L-glycero-beta-D-manno-heptose from D-glycero-beta-D-manno-heptose 7-phosphate: step 3/4. Functionally, catalyzes the phosphorylation of D-glycero-D-manno-heptose 7-phosphate at the C-1 position to selectively form D-glycero-beta-D-manno-heptose-1,7-bisphosphate. Catalyzes the ADP transfer from ATP to D-glycero-beta-D-manno-heptose 1-phosphate, yielding ADP-D-glycero-beta-D-manno-heptose. The sequence is that of Bifunctional protein HldE from Aeromonas salmonicida (strain A449).